A 1216-amino-acid chain; its full sequence is Probable cation-transporting ATPase 13A5 (1216 aa).

The next 5 membrane-spanning stretches (helical) occupy residues 33–53 (RALC…MFYW), 198–218 (LLVK…LTLW), 222–242 (GYIE…VLSV), 401–421 (FMVF…GVYM), and 433–453 (MALI…LTIG). Catalysis depends on Asp-486, which acts as the 4-aspartylphosphate intermediate. Residues Asn-650 and Asn-817 are each glycosylated (N-linked (GlcNAc...) asparagine). Asp-848 and Asp-852 together coordinate Mg(2+). The next 6 membrane-spanning stretches (helical) occupy residues 896–916 (ALVS…IQFI), 933–950 (YLLQ…TMSI), 971–991 (LLLS…CTFL), 1040–1060 (FEGT…AFIF), 1075–1095 (LFSL…FCDF), and 1113–1133 (VSIL…EDAV).

Belongs to the cation transport ATPase (P-type) (TC 3.A.3) family. Type V subfamily. Specifically expressed in brain and stomach.

The protein resides in the membrane. It catalyses the reaction ATP + H2O = ADP + phosphate + H(+). In Mus musculus (Mouse), this protein is Probable cation-transporting ATPase 13A5 (Atp13a5).